Here is a 149-residue protein sequence, read N- to C-terminus: 3-dehydroquinate dehydratase (149 aa).

Tyrosine 26 (proton acceptor) is an active-site residue. Residues asparagine 77, histidine 83, and aspartate 90 each coordinate substrate. Histidine 103 functions as the Proton donor in the catalytic mechanism. Substrate contacts are provided by residues 104–105 and arginine 114; that span reads LS.

Belongs to the type-II 3-dehydroquinase family. As to quaternary structure, homododecamer.

It catalyses the reaction 3-dehydroquinate = 3-dehydroshikimate + H2O. It functions in the pathway metabolic intermediate biosynthesis; chorismate biosynthesis; chorismate from D-erythrose 4-phosphate and phosphoenolpyruvate: step 3/7. Its function is as follows. Catalyzes a trans-dehydration via an enolate intermediate. In Haemophilus influenzae (strain PittEE), this protein is 3-dehydroquinate dehydratase.